The following is a 643-amino-acid chain: Macrolide export ATP-binding/permease protein MacB (643 aa).

The ABC transporter domain maps to 6–244 (IELKGVSRVF…QVRSPFGVRH (239 aa)). Position 42–49 (42–49 (GASGSGKS)) interacts with ATP. The next 4 helical transmembrane spans lie at 270–290 (VLTL…LAIG), 518–538 (LTIL…IGVM), 569–589 (FLIE…VIGL), and 606–626 (LMPI…FGYL).

This sequence belongs to the ABC transporter superfamily. Macrolide exporter (TC 3.A.1.122) family. In terms of assembly, homodimer.

It localises to the cell inner membrane. Functionally, non-canonical ABC transporter that contains transmembrane domains (TMD), which form a pore in the inner membrane, and an ATP-binding domain (NBD), which is responsible for energy generation. Confers resistance against macrolides. The sequence is that of Macrolide export ATP-binding/permease protein MacB from Wolinella succinogenes (strain ATCC 29543 / DSM 1740 / CCUG 13145 / JCM 31913 / LMG 7466 / NCTC 11488 / FDC 602W) (Vibrio succinogenes).